The sequence spans 272 residues: METYAVFGNPIAHSKSPFIHQQFAQQLDIVHPYGRVLAPINNFINTLDAFFAAGGKGANITVPFKEEAFARSDELTERASLAGAVNTLKRLEDGRLLGDNTDGIGLLSDLKRLNFIRPGWRILLIGAGGASRGVLLPLLSLDCAVTITNRTASRAEALAKIFAHTGSVHATDMDKLDGCEFDLIVNATSSGIRGEIPAIPASLIHPSLCCYDMFYQKGNTPFLSWCVQQGAKRYADGLGMLVGQAAHAVLLWHGVLPQVEPVIKLLQQELLA.

Residues 14 to 16 (SKS) and threonine 61 each bind shikimate. Lysine 65 functions as the Proton acceptor in the catalytic mechanism. Residue glutamate 77 coordinates NADP(+). Shikimate-binding residues include asparagine 86 and aspartate 102. NADP(+) contacts are provided by residues 126-130 (GAGGA), 149-154 (NRTASR), and methionine 213. Residue tyrosine 215 coordinates shikimate. Glycine 237 is a binding site for NADP(+).

The protein belongs to the shikimate dehydrogenase family. In terms of assembly, homodimer.

The enzyme catalyses shikimate + NADP(+) = 3-dehydroshikimate + NADPH + H(+). Its pathway is metabolic intermediate biosynthesis; chorismate biosynthesis; chorismate from D-erythrose 4-phosphate and phosphoenolpyruvate: step 4/7. Involved in the biosynthesis of the chorismate, which leads to the biosynthesis of aromatic amino acids. Catalyzes the reversible NADPH linked reduction of 3-dehydroshikimate (DHSA) to yield shikimate (SA). The chain is Shikimate dehydrogenase (NADP(+)) from Salmonella choleraesuis (strain SC-B67).